We begin with the raw amino-acid sequence, 472 residues long: Protein nucleotidyltransferase YdiU (472 aa).

Gly86, Gly88, Arg89, Lys109, Asp121, Gly122, Arg172, and Arg179 together coordinate ATP. Asp244 serves as the catalytic Proton acceptor. The Mg(2+) site is built by Asn245 and Asp254. ATP is bound at residue Asp254.

The protein belongs to the SELO family. Requires Mg(2+) as cofactor. The cofactor is Mn(2+).

The enzyme catalyses L-seryl-[protein] + ATP = 3-O-(5'-adenylyl)-L-seryl-[protein] + diphosphate. It carries out the reaction L-threonyl-[protein] + ATP = 3-O-(5'-adenylyl)-L-threonyl-[protein] + diphosphate. The catalysed reaction is L-tyrosyl-[protein] + ATP = O-(5'-adenylyl)-L-tyrosyl-[protein] + diphosphate. It catalyses the reaction L-histidyl-[protein] + UTP = N(tele)-(5'-uridylyl)-L-histidyl-[protein] + diphosphate. The enzyme catalyses L-seryl-[protein] + UTP = O-(5'-uridylyl)-L-seryl-[protein] + diphosphate. It carries out the reaction L-tyrosyl-[protein] + UTP = O-(5'-uridylyl)-L-tyrosyl-[protein] + diphosphate. Its function is as follows. Nucleotidyltransferase involved in the post-translational modification of proteins. It can catalyze the addition of adenosine monophosphate (AMP) or uridine monophosphate (UMP) to a protein, resulting in modifications known as AMPylation and UMPylation. This chain is Protein nucleotidyltransferase YdiU, found in Ruegeria pomeroyi (strain ATCC 700808 / DSM 15171 / DSS-3) (Silicibacter pomeroyi).